Reading from the N-terminus, the 421-residue chain is UDP-N-acetylglucosamine 1-carboxyvinyltransferase (421 aa).

22 to 23 (KN) lines the phosphoenolpyruvate pocket. Arginine 93 is a UDP-N-acetyl-alpha-D-glucosamine binding site. Residue cysteine 117 is the Proton donor of the active site. 2-(S-cysteinyl)pyruvic acid O-phosphothioketal is present on cysteine 117. Residues 122-126 (RPVDL), aspartate 308, and isoleucine 330 contribute to the UDP-N-acetyl-alpha-D-glucosamine site.

This sequence belongs to the EPSP synthase family. MurA subfamily.

It is found in the cytoplasm. The enzyme catalyses phosphoenolpyruvate + UDP-N-acetyl-alpha-D-glucosamine = UDP-N-acetyl-3-O-(1-carboxyvinyl)-alpha-D-glucosamine + phosphate. Its pathway is cell wall biogenesis; peptidoglycan biosynthesis. Its function is as follows. Cell wall formation. Adds enolpyruvyl to UDP-N-acetylglucosamine. In Pseudomonas syringae pv. tomato (strain ATCC BAA-871 / DC3000), this protein is UDP-N-acetylglucosamine 1-carboxyvinyltransferase.